The sequence spans 328 residues: Cytochrome c biogenesis protein CcsA (328 aa).

8 consecutive transmembrane segments (helical) span residues 13–33 (ISFS…LVNL), 46–66 (GIII…IFSG), 73–93 (LYES…VSYF), 101–121 (LNAI…SGLL), 146–166 (MILG…LLVI), 234–254 (IISL…VWAN), 263–283 (WDPK…YLHI), and 295–315 (AIVA…VNLL).

Belongs to the CcmF/CycK/Ccl1/NrfE/CcsA family. As to quaternary structure, may interact with Ccs1.

It is found in the plastid. It localises to the chloroplast thylakoid membrane. In terms of biological role, required during biogenesis of c-type cytochromes (cytochrome c6 and cytochrome f) at the step of heme attachment. The sequence is that of Cytochrome c biogenesis protein CcsA from Olimarabidopsis pumila (Dwarf rocket).